Consider the following 220-residue polypeptide: Uracil phosphoribosyltransferase 2 (220 aa).

77 to 80 (ARDI) contacts GTP. The 5-phospho-alpha-D-ribose 1-diphosphate site is built by arginine 87 and arginine 113. Arginine 134 provides a ligand contact to GTP. 5-phospho-alpha-D-ribose 1-diphosphate-binding positions include aspartate 140 and 140–148 (DPLLATGNS). Tyrosine 204 is a binding site for D-ribose 5-phosphate. Uracil is bound by residues valine 205 and 210–212 (GDF). Position 211 (aspartate 211) interacts with 5-phospho-alpha-D-ribose 1-diphosphate.

The protein belongs to the UPRTase family. Requires Mg(2+) as cofactor.

It carries out the reaction UMP + diphosphate = 5-phospho-alpha-D-ribose 1-diphosphate + uracil. Its pathway is pyrimidine metabolism; UMP biosynthesis via salvage pathway; UMP from uracil: step 1/1. With respect to regulation, allosterically activated by GTP. Its function is as follows. Catalyzes the conversion of uracil and 5-phospho-alpha-D-ribose 1-diphosphate (PRPP) to UMP and diphosphate. The protein is Uracil phosphoribosyltransferase 2 of Schizosaccharomyces pombe (strain 972 / ATCC 24843) (Fission yeast).